A 520-amino-acid chain; its full sequence is Protein nucleotidyltransferase YdiU (520 aa).

The ATP site is built by G108, G110, R111, K130, D142, G143, R193, and R200. D269 acts as the Proton acceptor in catalysis. Mg(2+) is bound by residues N270 and D279. D279 is a binding site for ATP.

This sequence belongs to the SELO family. Mg(2+) is required as a cofactor. It depends on Mn(2+) as a cofactor.

It carries out the reaction L-seryl-[protein] + ATP = 3-O-(5'-adenylyl)-L-seryl-[protein] + diphosphate. The catalysed reaction is L-threonyl-[protein] + ATP = 3-O-(5'-adenylyl)-L-threonyl-[protein] + diphosphate. The enzyme catalyses L-tyrosyl-[protein] + ATP = O-(5'-adenylyl)-L-tyrosyl-[protein] + diphosphate. It catalyses the reaction L-histidyl-[protein] + UTP = N(tele)-(5'-uridylyl)-L-histidyl-[protein] + diphosphate. It carries out the reaction L-seryl-[protein] + UTP = O-(5'-uridylyl)-L-seryl-[protein] + diphosphate. The catalysed reaction is L-tyrosyl-[protein] + UTP = O-(5'-uridylyl)-L-tyrosyl-[protein] + diphosphate. Functionally, nucleotidyltransferase involved in the post-translational modification of proteins. It can catalyze the addition of adenosine monophosphate (AMP) or uridine monophosphate (UMP) to a protein, resulting in modifications known as AMPylation and UMPylation. This is Protein nucleotidyltransferase YdiU from Cupriavidus pinatubonensis (strain JMP 134 / LMG 1197) (Cupriavidus necator (strain JMP 134)).